Here is a 132-residue protein sequence, read N- to C-terminus: Small ribosomal subunit protein uS8c (132 aa).

This sequence belongs to the universal ribosomal protein uS8 family. In terms of assembly, part of the 30S ribosomal subunit.

It localises to the plastid. The protein localises to the chloroplast. Its function is as follows. One of the primary rRNA binding proteins, it binds directly to 16S rRNA central domain where it helps coordinate assembly of the platform of the 30S subunit. The protein is Small ribosomal subunit protein uS8c (rps8) of Calycanthus floridus var. glaucus (Eastern sweetshrub).